Here is a 354-residue protein sequence, read N- to C-terminus: Trans-enoyl reductase pydC (354 aa).

Residues 16 to 342 form the Enoyl reductase (ER) domain; that stretch reads ANTDPVTFEI…RREVSGEKIV (327 aa). NADP(+) contacts are provided by residues 51-54, 180-183, Y198, 245-246, and 336-337; these read CDYK, SPKN, FE, and VS.

The protein belongs to the zinc-containing alcohol dehydrogenase family. As to quaternary structure, monomer.

The protein operates within mycotoxin biosynthesis. Trans-enoyl reductase; part of the gene cluster that mediates the biosynthesis of pyrrocidines, fungal natural products containing a macrocyclic para-cyclophane connected to a decahydrofluorene ring system that show potent antibiotic activities toward Gram-negative bacteria. Within the pathway, the PKS-NRPS pydA, with the help of the trans-enoyl reductase pydC, synthesize the polyketide-tyrosyl acyl thioester product which can be reductively off-loaded by the terminal reductase (R) domain in pydA. The PKS module of pydA acts in combination with the trans-acting enoyl reductase pydC to produce a methylated polyketide attached to the ACP domain. In parallel, the adenylation (A) domain of the NRPS module activated L-tyrosine, which is then transferred to the ACP domain. The condensation (C) domain subsequently link this group to the polyketide chain, forming an enzyme-bound amide. The alpha/beta hydrolase pydG is then required to catalyze the subsequent Knoevenagel condensation that affords the 3-pyrrolin-2-one ring, whereas the four proteins pydB, pydE, pydX and pydZ then function synergistically to form the cyclophane. PydB and the membrane-bound pydX and pydZ are lipid-binding proteins that can sequester and mold the pdyG product into the inverse S-shape. Binding of the medium chain reductase pydE to the complex would trigger the cascade oxidative cyclization. PydY is involved in the Diels-Alder cycloaddition that forms the decahydrofluorene core. Additional non-enzymatic hydroxylation yields pyrrocidine A2 which can be further reduced into pyrrocidine B by an endogenous reductase. This chain is Trans-enoyl reductase pydC, found in Acremonium sp.